A 479-amino-acid polypeptide reads, in one-letter code: Ribosomal RNA small subunit methyltransferase F (479 aa).

S-adenosyl-L-methionine contacts are provided by residues Ala-125–Lys-131, Glu-149, Asp-176, and Asp-194. Residue Cys-247 is the Nucleophile of the active site.

Belongs to the class I-like SAM-binding methyltransferase superfamily. RsmB/NOP family.

It is found in the cytoplasm. It catalyses the reaction cytidine(1407) in 16S rRNA + S-adenosyl-L-methionine = 5-methylcytidine(1407) in 16S rRNA + S-adenosyl-L-homocysteine + H(+). Specifically methylates the cytosine at position 1407 (m5C1407) of 16S rRNA. This chain is Ribosomal RNA small subunit methyltransferase F, found in Salmonella paratyphi A (strain ATCC 9150 / SARB42).